Consider the following 113-residue polypeptide: 2Fe-2S ferredoxin (113 aa).

Positions 2 to 104 (PKVIFLPNED…DLVVEIPKYN (103 aa)) constitute a 2Fe-2S ferredoxin-type domain. Residues Cys42, Cys48, Cys51, and Cys87 each contribute to the [2Fe-2S] cluster site.

The protein belongs to the adrenodoxin/putidaredoxin family. The cofactor is [2Fe-2S] cluster.

Its function is as follows. Ferredoxin are iron-sulfur proteins that transfer electrons in a wide variety of metabolic reactions. The sequence is that of 2Fe-2S ferredoxin (fdx) from Haemophilus influenzae (strain ATCC 51907 / DSM 11121 / KW20 / Rd).